The chain runs to 229 residues: UPF0758 protein MA_1979 (229 aa).

An MPN domain is found at Lys-106 to Val-228. The Zn(2+) site is built by His-177, His-179, and Asp-190. The JAMM motif motif lies at His-177–Asp-190.

Belongs to the UPF0758 family.

The protein is UPF0758 protein MA_1979 of Methanosarcina acetivorans (strain ATCC 35395 / DSM 2834 / JCM 12185 / C2A).